Reading from the N-terminus, the 463-residue chain is Cysteine--tRNA ligase (463 aa).

Cys29 contributes to the Zn(2+) binding site. The 'HIGH' region signature appears at 31-41 (PTVYNYAHIGN). Zn(2+) contacts are provided by Cys211, His236, and Glu240. The 'KMSKS' region signature appears at 269-273 (KMSKS). Residue Lys272 participates in ATP binding.

Belongs to the class-I aminoacyl-tRNA synthetase family. In terms of assembly, monomer. It depends on Zn(2+) as a cofactor.

Its subcellular location is the cytoplasm. It catalyses the reaction tRNA(Cys) + L-cysteine + ATP = L-cysteinyl-tRNA(Cys) + AMP + diphosphate. The chain is Cysteine--tRNA ligase from Caulobacter vibrioides (strain ATCC 19089 / CIP 103742 / CB 15) (Caulobacter crescentus).